Consider the following 145-residue polypeptide: Putative transcriptional regulatory protein PYRAB13000 (145 aa).

It belongs to the Tfx family.

Functionally, putative transcriptional regulator. In Pyrococcus abyssi (strain GE5 / Orsay), this protein is Putative transcriptional regulatory protein PYRAB13000.